The chain runs to 121 residues: Small ribosomal subunit protein uS13 (121 aa).

The segment at 94–121 is disordered; the sequence is GLPVRGQNTKNNARTRKGPRRTVANKKK. Over residues 106–121 the composition is skewed to basic residues; the sequence is ARTRKGPRRTVANKKK.

This sequence belongs to the universal ribosomal protein uS13 family. As to quaternary structure, part of the 30S ribosomal subunit. Forms a loose heterodimer with protein S19. Forms two bridges to the 50S subunit in the 70S ribosome.

Its function is as follows. Located at the top of the head of the 30S subunit, it contacts several helices of the 16S rRNA. In the 70S ribosome it contacts the 23S rRNA (bridge B1a) and protein L5 of the 50S subunit (bridge B1b), connecting the 2 subunits; these bridges are implicated in subunit movement. Contacts the tRNAs in the A and P-sites. This is Small ribosomal subunit protein uS13 from Anoxybacillus flavithermus (strain DSM 21510 / WK1).